A 506-amino-acid chain; its full sequence is Histidine ammonia-lyase (506 aa).

The 5-imidazolinone (Ala-Gly) cross-link spans 141 to 143 (ASG). Ser-142 is modified (2,3-didehydroalanine (Ser)).

The protein belongs to the PAL/histidase family. Post-translationally, contains an active site 4-methylidene-imidazol-5-one (MIO), which is formed autocatalytically by cyclization and dehydration of residues Ala-Ser-Gly.

The protein resides in the cytoplasm. It catalyses the reaction L-histidine = trans-urocanate + NH4(+). It participates in amino-acid degradation; L-histidine degradation into L-glutamate; N-formimidoyl-L-glutamate from L-histidine: step 1/3. The polypeptide is Histidine ammonia-lyase (Burkholderia multivorans (strain ATCC 17616 / 249)).